We begin with the raw amino-acid sequence, 96 residues long: ESAT-6-like protein EsxH (96 aa).

Residues His14, His70, His76, and Glu77 each coordinate Zn(2+).

Belongs to the WXG100 family. ESAT-6 subfamily. Forms a tight 1:1 complex with EsxG. When it is complexed to EsxG, interacts directly with host HGS/HRS.

It localises to the secreted. In terms of biological role, esxH, in complex with EsxG, disrupts ESCRT function and impairs host phagosome maturation, thereby promoting intracellular bacterial growth. The complex acts by interacting, via EsxH, with the host hepatocyte growth factor-regulated tyrosine kinase substrate (HGS/HRS), a component of the ESCRT machinery. This Mycobacterium tuberculosis (strain ATCC 25618 / H37Rv) protein is ESAT-6-like protein EsxH.